The primary structure comprises 255 residues: Small ribosomal subunit protein uS2 (255 aa).

It belongs to the universal ribosomal protein uS2 family.

This is Small ribosomal subunit protein uS2 from Streptococcus pyogenes serotype M49 (strain NZ131).